The sequence spans 332 residues: Formamidase (332 aa).

The CN hydrolase domain maps to 14–259 (FLTALIQYPV…WEIVTAEVYP (246 aa)). Glutamate 60 (proton acceptor) is an active-site residue. Lysine 132 acts as the Proton donor in catalysis. The active-site Nucleophile is cysteine 165.

The protein belongs to the carbon-nitrogen hydrolase superfamily. Aliphatic amidase family.

The catalysed reaction is formamide + H2O = formate + NH4(+). Functionally, is an aliphatic amidase with a restricted substrate specificity, as it only hydrolyzes formamide. In Bacillus cereus (strain G9842), this protein is Formamidase.